We begin with the raw amino-acid sequence, 363 residues long: uncharacterized protein (363 aa).

4 residues coordinate S-adenosyl-L-methionine: Gln-198, Tyr-225, Glu-246, and Asp-291. Cys-318 acts as the Nucleophile in catalysis.

Belongs to the class I-like SAM-binding methyltransferase superfamily. RNA M5U methyltransferase family.

This is an uncharacterized protein from Mycoplasma mobile (strain ATCC 43663 / 163K / NCTC 11711) (Mesomycoplasma mobile).